Here is a 126-residue protein sequence, read N- to C-terminus: Aspartate 1-decarboxylase (126 aa).

Ser-25 functions as the Schiff-base intermediate with substrate; via pyruvic acid in the catalytic mechanism. Ser-25 is subject to Pyruvic acid (Ser). Residue Thr-57 participates in substrate binding. Residue Tyr-58 is the Proton donor of the active site. 73-75 (GAA) is a binding site for substrate.

It belongs to the PanD family. As to quaternary structure, heterooctamer of four alpha and four beta subunits. Pyruvate serves as cofactor. Post-translationally, is synthesized initially as an inactive proenzyme, which is activated by self-cleavage at a specific serine bond to produce a beta-subunit with a hydroxyl group at its C-terminus and an alpha-subunit with a pyruvoyl group at its N-terminus.

It localises to the cytoplasm. The enzyme catalyses L-aspartate + H(+) = beta-alanine + CO2. It functions in the pathway cofactor biosynthesis; (R)-pantothenate biosynthesis; beta-alanine from L-aspartate: step 1/1. Catalyzes the pyruvoyl-dependent decarboxylation of aspartate to produce beta-alanine. The chain is Aspartate 1-decarboxylase from Methylobacillus flagellatus (strain ATCC 51484 / DSM 6875 / VKM B-1610 / KT).